The chain runs to 231 residues: 2-C-methyl-D-erythritol 4-phosphate cytidylyltransferase (231 aa).

This sequence belongs to the IspD/TarI cytidylyltransferase family. IspD subfamily.

It catalyses the reaction 2-C-methyl-D-erythritol 4-phosphate + CTP + H(+) = 4-CDP-2-C-methyl-D-erythritol + diphosphate. The protein operates within isoprenoid biosynthesis; isopentenyl diphosphate biosynthesis via DXP pathway; isopentenyl diphosphate from 1-deoxy-D-xylulose 5-phosphate: step 2/6. Its function is as follows. Catalyzes the formation of 4-diphosphocytidyl-2-C-methyl-D-erythritol from CTP and 2-C-methyl-D-erythritol 4-phosphate (MEP). This Xylella fastidiosa (strain M23) protein is 2-C-methyl-D-erythritol 4-phosphate cytidylyltransferase.